Here is a 102-residue protein sequence, read N- to C-terminus: Acid shock protein (102 aa).

An N-terminal signal peptide occupies residues methionine 1–alanine 21. Positions alanine 22–lysine 41 are enriched in low complexity. The propeptide occupies alanine 22–glutamine 58. The segment at alanine 22 to alanine 102 is disordered. Residues alanine 80–histidine 90 show a composition bias toward basic residues. Low complexity predominate over residues glutamine 91–alanine 102.

It belongs to the Asr family. Proteolytic processing gives rise to the active protein.

It localises to the periplasm. Functionally, required for growth and/or survival at acidic conditions. The sequence is that of Acid shock protein from Escherichia coli O17:K52:H18 (strain UMN026 / ExPEC).